A 131-amino-acid chain; its full sequence is Superoxide dismutase [Ni] (131 aa).

The propeptide occupies 1-14 (MLSRLFAPKVKVSA). Positions 15, 16, and 20 each coordinate Ni(2+).

The protein belongs to the nickel superoxide dismutase family. As to quaternary structure, homohexamer. The hexameric protein has roughly the shape of a hollow sphere with an outer diameter of 72 Angstroms and a large inner cavity. The cofactor is Ni(2+).

The protein resides in the cytoplasm. The enzyme catalyses 2 superoxide + 2 H(+) = H2O2 + O2. This Streptomyces seoulensis protein is Superoxide dismutase [Ni] (sodN).